Consider the following 497-residue polypeptide: NAD(P)H-quinone oxidoreductase chain 4, chloroplastic (497 aa).

The next 13 membrane-spanning stretches (helical) occupy residues 4–24 (LPWL…IPLF), 35–55 (YTLG…CCHF), 87–107 (MGLI…AWPV), 113–133 (LFHF…ASQD), 134–154 (ILLF…LLSI), 167–187 (FILY…TIGL), 207–227 (IALE…KLPI), 242–262 (HYST…YGLI), 274–294 (AIFA…ASLI), 313–333 (MGFV…GAIL), 386–406 (LALP…GIVI), 416–436 (IVIT…LLSM), and 462–482 (IFIS…PNLV).

Belongs to the complex I subunit 4 family.

It is found in the plastid. Its subcellular location is the chloroplast thylakoid membrane. It carries out the reaction a plastoquinone + NADH + (n+1) H(+)(in) = a plastoquinol + NAD(+) + n H(+)(out). The enzyme catalyses a plastoquinone + NADPH + (n+1) H(+)(in) = a plastoquinol + NADP(+) + n H(+)(out). This chain is NAD(P)H-quinone oxidoreductase chain 4, chloroplastic, found in Angiopteris evecta (Mule's foot fern).